We begin with the raw amino-acid sequence, 583 residues long: ATP-dependent lipid A-core flippase (583 aa).

Transmembrane regions (helical) follow at residues L27 to L47, L69 to L89, A142 to Y162, W165 to V185, and A249 to L269. An ABC transmembrane type-1 domain is found at A28–R310. An ABC transporter domain is found at V342–I578. Residue G376–S383 participates in ATP binding.

It belongs to the ABC transporter superfamily. Lipid exporter (TC 3.A.1.106) family. In terms of assembly, homodimer.

Its subcellular location is the cell inner membrane. The catalysed reaction is ATP + H2O + lipid A-core oligosaccharideSide 1 = ADP + phosphate + lipid A-core oligosaccharideSide 2.. Functionally, involved in lipopolysaccharide (LPS) biosynthesis. Translocates lipid A-core from the inner to the outer leaflet of the inner membrane. Transmembrane domains (TMD) form a pore in the inner membrane and the ATP-binding domain (NBD) is responsible for energy generation. This chain is ATP-dependent lipid A-core flippase, found in Vibrio vulnificus (strain CMCP6).